Reading from the N-terminus, the 124-residue chain is Large ribosomal subunit protein bL12 (124 aa).

The protein belongs to the bacterial ribosomal protein bL12 family. As to quaternary structure, homodimer. Part of the ribosomal stalk of the 50S ribosomal subunit. Forms a multimeric L10(L12)X complex, where L10 forms an elongated spine to which 2 to 4 L12 dimers bind in a sequential fashion. Binds GTP-bound translation factors.

Functionally, forms part of the ribosomal stalk which helps the ribosome interact with GTP-bound translation factors. Is thus essential for accurate translation. The sequence is that of Large ribosomal subunit protein bL12 from Burkholderia cenocepacia (strain ATCC BAA-245 / DSM 16553 / LMG 16656 / NCTC 13227 / J2315 / CF5610) (Burkholderia cepacia (strain J2315)).